The primary structure comprises 297 residues: Nucleotide-binding protein CJA_2809 (297 aa).

8–15 (GLSGSGKT) is an ATP binding site. 59–62 (DVRN) provides a ligand contact to GTP.

Belongs to the RapZ-like family.

Displays ATPase and GTPase activities. In Cellvibrio japonicus (strain Ueda107) (Pseudomonas fluorescens subsp. cellulosa), this protein is Nucleotide-binding protein CJA_2809.